The following is a 447-amino-acid chain: Probable glycine dehydrogenase (decarboxylating) subunit 1 (447 aa).

This sequence belongs to the GcvP family. N-terminal subunit subfamily. In terms of assembly, the glycine cleavage system is composed of four proteins: P, T, L and H. In this organism, the P 'protein' is a heterodimer of two subunits.

The enzyme catalyses N(6)-[(R)-lipoyl]-L-lysyl-[glycine-cleavage complex H protein] + glycine + H(+) = N(6)-[(R)-S(8)-aminomethyldihydrolipoyl]-L-lysyl-[glycine-cleavage complex H protein] + CO2. Functionally, the glycine cleavage system catalyzes the degradation of glycine. The P protein binds the alpha-amino group of glycine through its pyridoxal phosphate cofactor; CO(2) is released and the remaining methylamine moiety is then transferred to the lipoamide cofactor of the H protein. The protein is Probable glycine dehydrogenase (decarboxylating) subunit 1 of Bacillus anthracis (strain A0248).